The chain runs to 680 residues: MENKFKRTTVTSALPYANGPVHIGHLAGVYVPADIYVRYLRLKKEDVLFIGGSDEHGVPITIRAKKEGITPQDVVDRYHTLIKESFKEFGISFDIYSRTTSKTHHELASEFFKTLYDKGEFIEKTSMQYYDEEAHQFLADRYITGECPHCHAEGAYGDQCEKCGTSLSPTDLINPKSAISGSKPVMRETKHWYLPLDKHEGWLREWILENHKEWRPNVYGQCKSWLDMGLQPRAVSRDLDWGIPVPVEGAEGKVLYVWFDAPIGYISNTKELLPDSWETWWKDPETRLIHFIGKDNIVFHCIVFPAMLKAEGSYILPDNVPSNEFLNLEGDKISTSRNWAVWLHEYLQDFPGKQDVLRYVLTANAPETKDNDFTWKDFQARNNNELVAVYGNFVNRALVLTHKYFDGKVPVCGELTDYDKETLKEFADVKAEVEKLLDVFKFRDAQKEAMNLARIGNKYLADTEPWKLAKTDMDRVATILNIALQLVANLAIAFEPFLPFSSEKLRKMLNMETFEWDQLGRTDLLAEGHQLNKAELLFEKIEDETIQAQVDKLLATKKANEAANYKANPIKPVIAFEEFEKLDIRVGTVLECEVVPKMKKLLKFKIADGLENRTIVSGIAQHYKPEELVGKQVLFIANLAPRQFKNGLVSEGMILSAENFDGTLAVTSLLREVKPGSEVK.

The 'HIGH' region motif lies at 15–25; that stretch reads PYANGPVHIGH. Residues Cys147, Cys150, Cys160, and Cys163 each contribute to the Zn(2+) site. The short motif at 332 to 336 is the 'KMSKS' region element; the sequence is KISTS. Thr335 is a binding site for ATP. The tRNA-binding domain maps to 578 to 680; sequence EFEKLDIRVG…REVKPGSEVK (103 aa).

It belongs to the class-I aminoacyl-tRNA synthetase family. MetG type 1 subfamily. Homodimer. The cofactor is Zn(2+).

It is found in the cytoplasm. It catalyses the reaction tRNA(Met) + L-methionine + ATP = L-methionyl-tRNA(Met) + AMP + diphosphate. In terms of biological role, is required not only for elongation of protein synthesis but also for the initiation of all mRNA translation through initiator tRNA(fMet) aminoacylation. This Phocaeicola vulgatus (strain ATCC 8482 / DSM 1447 / JCM 5826 / CCUG 4940 / NBRC 14291 / NCTC 11154) (Bacteroides vulgatus) protein is Methionine--tRNA ligase.